A 387-amino-acid chain; its full sequence is Exodeoxyribonuclease 7 large subunit (387 aa).

It belongs to the XseA family. In terms of assembly, heterooligomer composed of large and small subunits.

Its subcellular location is the cytoplasm. The catalysed reaction is Exonucleolytic cleavage in either 5'- to 3'- or 3'- to 5'-direction to yield nucleoside 5'-phosphates.. Bidirectionally degrades single-stranded DNA into large acid-insoluble oligonucleotides, which are then degraded further into small acid-soluble oligonucleotides. This Campylobacter hominis (strain ATCC BAA-381 / DSM 21671 / CCUG 45161 / LMG 19568 / NCTC 13146 / CH001A) protein is Exodeoxyribonuclease 7 large subunit.